Here is a 175-residue protein sequence, read N- to C-terminus: Alpha-crystallin B chain (175 aa).

An N-acetylmethionine modification is found at Met1. Ser19 carries the phosphoserine modification. Ser41 carries O-linked (GlcNAc) serine glycosylation. Ser45 and Ser59 each carry phosphoserine. Residues 56-164 (RAPSWIDTGL…PERTIPITRE (109 aa)) enclose the sHSP domain. His83 is a binding site for Zn(2+). Lys90 carries N-linked (Glc) (glycation) lysine glycosylation. Residue Lys92 is modified to N6-acetyllysine; alternate. Lys92 carries an N-linked (Glc) (glycation) lysine; alternate glycan. His104, Glu106, His111, and His119 together coordinate Zn(2+). The interval 144-175 (TVNGPRKQASGPERTIPITREEKPAVTAAPKK) is disordered. Lys166 bears the N6-acetyllysine mark. Thr170 carries an O-linked (GlcNAc) threonine glycan.

Belongs to the small heat shock protein (HSP20) family. As to quaternary structure, heteromer composed of three CRYAA and one CRYAB subunits. Aggregates with homologous proteins, including the small heat shock protein HSPB1, to form large heteromeric complexes. Inter-subunit bridging via zinc ions enhances stability, which is crucial as there is no protein turn over in the lens. Interacts with HSPBAP1 and TTN/titin. Interacts with TMEM109; in the cellular response to DNA damage. Interacts with DES; binds rapidly during early stages of DES filament assembly and a reduced binding seen in the later stages. Interacts with TMED10; the interaction mediates the translocation from the cytoplasm into the ERGIC (endoplasmic reticulum-Golgi intermediate compartment) and thereby secretion. Interacts with ATP6V1A and with MTOR, forming a ternary complex. In terms of processing, it is not known whether either Lys-90, or Lys-92, or both are glycated. In terms of tissue distribution, lens as well as other tissues.

It localises to the cytoplasm. Its subcellular location is the nucleus. The protein localises to the secreted. The protein resides in the lysosome. Its function is as follows. May contribute to the transparency and refractive index of the lens. Has chaperone-like activity, preventing aggregation of various proteins under a wide range of stress conditions. In lens epithelial cells, stabilizes the ATP6V1A protein, preventing its degradation by the proteasome. This chain is Alpha-crystallin B chain (CRYAB), found in Bos taurus (Bovine).